A 312-amino-acid chain; its full sequence is Ribosomal RNA small subunit methyltransferase H (312 aa).

S-adenosyl-L-methionine contacts are provided by residues 33–35 (AGH), D53, F79, D100, and Q107.

The protein belongs to the methyltransferase superfamily. RsmH family.

It is found in the cytoplasm. It carries out the reaction cytidine(1402) in 16S rRNA + S-adenosyl-L-methionine = N(4)-methylcytidine(1402) in 16S rRNA + S-adenosyl-L-homocysteine + H(+). Functionally, specifically methylates the N4 position of cytidine in position 1402 (C1402) of 16S rRNA. The polypeptide is Ribosomal RNA small subunit methyltransferase H (Clostridium acetobutylicum (strain ATCC 824 / DSM 792 / JCM 1419 / IAM 19013 / LMG 5710 / NBRC 13948 / NRRL B-527 / VKM B-1787 / 2291 / W)).